A 96-amino-acid chain; its full sequence is Small ribosomal subunit protein bS18 (96 aa).

Positions 1 to 20 are disordered; sequence MSHGGKRRSGDGGSEGSSYS.

The protein belongs to the bacterial ribosomal protein bS18 family. Part of the 30S ribosomal subunit. Forms a tight heterodimer with protein bS6.

Its function is as follows. Binds as a heterodimer with protein bS6 to the central domain of the 16S rRNA, where it helps stabilize the platform of the 30S subunit. The chain is Small ribosomal subunit protein bS18 from Anaplasma phagocytophilum (strain HZ).